The following is an 839-amino-acid chain: Eukaryotic translation initiation factor 3 subunit C (839 aa).

The disordered stretch occupies residues 1–93 (MSRFFVAGYN…DSDSEDEGRR (93 aa)). Acidic residues-rich tracts occupy residues 14–27 (SSEE…DEEL) and 34–58 (GEQE…SDSD). In terms of domain architecture, PCI spans 585–759 (FHQHINLELL…AFIQFASTEP (175 aa)). The disordered stretch occupies residues 783–839 (EKTSSNGYGKKQPQQQQQQQQQQQQQQQQQKDLLQEDNSRFRYANVNTNNDEFQTTA). A compositionally biased stretch (low complexity) spans 794-812 (QPQQQQQQQQQQQQQQQQQ). Positions 827 to 839 (NVNTNNDEFQTTA) are enriched in polar residues.

This sequence belongs to the eIF-3 subunit C family. Component of the eukaryotic translation initiation factor 3 (eIF-3) complex.

It is found in the cytoplasm. Functionally, component of the eukaryotic translation initiation factor 3 (eIF-3) complex, which is involved in protein synthesis of a specialized repertoire of mRNAs and, together with other initiation factors, stimulates binding of mRNA and methionyl-tRNAi to the 40S ribosome. The eIF-3 complex specifically targets and initiates translation of a subset of mRNAs involved in cell proliferation. The chain is Eukaryotic translation initiation factor 3 subunit C from Scheffersomyces stipitis (strain ATCC 58785 / CBS 6054 / NBRC 10063 / NRRL Y-11545) (Yeast).